The sequence spans 186 residues: Thymidine kinase (186 aa).

An ATP-binding site is contributed by 8–15 (GPMYSGKT). Residue Glu86 is the Proton acceptor of the active site. Phe118 provides a ligand contact to substrate. Residues Cys143 and Cys146 each contribute to the Zn(2+) site. 162 to 166 (IIEIG) is a binding site for substrate. 2 residues coordinate Zn(2+): Cys175 and Cys178.

This sequence belongs to the thymidine kinase family.

The catalysed reaction is thymidine + ATP = dTMP + ADP + H(+). The protein is Thymidine kinase (TK) of Choristoneura fumiferana (Spruce budworm moth).